The chain runs to 200 residues: Probable nicotinate-nucleotide adenylyltransferase (200 aa).

The protein belongs to the NadD family.

It catalyses the reaction nicotinate beta-D-ribonucleotide + ATP + H(+) = deamido-NAD(+) + diphosphate. Its pathway is cofactor biosynthesis; NAD(+) biosynthesis; deamido-NAD(+) from nicotinate D-ribonucleotide: step 1/1. Functionally, catalyzes the reversible adenylation of nicotinate mononucleotide (NaMN) to nicotinic acid adenine dinucleotide (NaAD). The polypeptide is Probable nicotinate-nucleotide adenylyltransferase (Clostridium botulinum (strain Alaska E43 / Type E3)).